Reading from the N-terminus, the 854-residue chain is Zinc finger protein 341 (854 aa).

The C2H2-type 1; atypical zinc finger occupies 53 to 76 (FLCGKCKKQFNSLPAFMTHKREQC). A disordered region spans residues 152 to 217 (DQPMPQGPPP…GRPNPGGNGV (66 aa)). Residues 163–176 (QSSLNMHSVPSYLT) show a composition bias toward polar residues. Residues 177–210 (QPPPPPPPPPPLPPPPPPQPPPPPPQSLGPPGRP) are compositionally biased toward pro residues. C2H2-type zinc fingers lie at residues 322–344 (LKCSYCDKSFTKNFDLQQHIRSH) and 350–372 (FQCIACGRAFAQKSNVKKHMQTH). The disordered stretch occupies residues 399–434 (SRQEDEESTGLGQPLPGAPQPQALSTAGEEEGDKPE). Low complexity predominate over residues 408-422 (GLGQPLPGAPQPQAL). C2H2-type zinc fingers lie at residues 445–467 (YLCQFCPSKFSTYFQLKSHMTQH), 473–497 (YKCVVKSCAQTFPKLDTFLEHIKSH), 503–525 (YRCHLCGKDFPSLYDLGVHQYSH), 540–564 (YKCVKCVNKYSTPEALEHHLQTATH), 566–588 (FPCPHCQKVFPCERYLRRHLPTH), 594–616 (FKCQVCKKFFRREHYLKLHAHIH), 622–644 (YKCSVCESAFNRKDKLKRHMLIH), 650–677 (YKCPFSTHTGCSKEFNRPDKLKAHILSH), and 683–705 (HKCALCSKSFSRRAHLAEHQRAH). The tract at residues 731–763 (CRLGPQKDKDLQTRRPPQRRAAPRSCGSGGRKV) is disordered.

This sequence belongs to the krueppel C2H2-type zinc-finger protein family. Binds DNA and to the STAT3 promoter.

Its subcellular location is the nucleus. Its function is as follows. Transcriptional activator of STAT3 involved in the regulation of immune homeostasis. Also able to activate STAT1 transcription. The chain is Zinc finger protein 341 (ZNF341) from Homo sapiens (Human).